Reading from the N-terminus, the 342-residue chain is Phenylalanine--tRNA ligase alpha subunit (342 aa).

Residue E257 coordinates Mg(2+).

The protein belongs to the class-II aminoacyl-tRNA synthetase family. Phe-tRNA synthetase alpha subunit type 1 subfamily. Tetramer of two alpha and two beta subunits. Mg(2+) serves as cofactor.

It localises to the cytoplasm. It catalyses the reaction tRNA(Phe) + L-phenylalanine + ATP = L-phenylalanyl-tRNA(Phe) + AMP + diphosphate + H(+). The sequence is that of Phenylalanine--tRNA ligase alpha subunit (pheS) from Chlamydia trachomatis serovar D (strain ATCC VR-885 / DSM 19411 / UW-3/Cx).